Reading from the N-terminus, the 788-residue chain is Spastin (788 aa).

Residues 1–105 (MVRTKNQSSS…PRSAGGPSSV (105 aa)) are disordered. At 1–116 (MVRTKNQSSS…KQNLYVVSFP (116 aa)) the chain is on the cytoplasmic side. The segment at 1 to 227 (MVRTKNQSSS…NRSGSGYSPG (227 aa)) is required for localization to punctate cytoplasmic foci. Low complexity-rich tracts occupy residues 8 to 48 (SSSS…SSHR) and 57 to 75 (ATNVSSSSNRRTTPGSSPD). The segment at residues 117 to 137 (IIFLFNVLRSLIYQLFCIFRY) is an intramembrane region (helical). Residues 138-788 (LYGASTKVIY…WSSDYGDITI (651 aa)) are Cytoplasmic-facing. The tract at residues 227-788 (GPGDPLLAKQ…WSSDYGDITI (562 aa)) is sufficient for interaction with microtubules and microtubule severing. The MIT domain occupies 240–315 (HRRAFEYISK…SMARDRLHFL (76 aa)). The span at 331 to 353 (EKQKANESREQQQKPQKAREAAD) shows a compositional bias: basic and acidic residues. The segment at 331–484 (EKQKANESRE…SGSGSGASTP (154 aa)) is disordered. Low complexity predominate over residues 387 to 400 (ATATTPTSSSSLAS). 2 stretches are compositionally biased toward polar residues: residues 419–433 (NKSQTLPRNLGSKTS) and 453–469 (QFSSGRNTPPQRSRTPI). The tract at residues 471–485 (NNGASGSGSGASTPV) is required for interaction with microtubules. Position 553–560 (553–560 (GPPGNGKT)) interacts with ATP.

Belongs to the AAA ATPase family. Spastin subfamily. In terms of assembly, homohexamer. The homohexamer is stabilized by ATP-binding. The homohexamer may adopt a ring conformation through which microtubules pass prior to being severed. Interacts with microtubules. Interacts with atl; may be involved in microtubule dynamics.

The protein localises to the membrane. Its subcellular location is the cytoplasm. It is found in the cytoskeleton. The protein resides in the microtubule organizing center. It localises to the centrosome. The protein localises to the chromosome. Its subcellular location is the lipid droplet. The catalysed reaction is n ATP + n H2O + a microtubule = n ADP + n phosphate + (n+1) alpha/beta tubulin heterodimers.. Its function is as follows. ATP-dependent microtubule severing protein. Stimulates microtubule minus-end depolymerization and poleward microtubule flux in the mitotic spindle. Regulates microtubule stability in the neuromuscular junction synapse. Involved in lipid metabolism by regulating the size and distribution of lipid droplets. Involved in axon regeneration by regulating microtubule severing. This chain is Spastin, found in Drosophila persimilis (Fruit fly).